Consider the following 129-residue polypeptide: Large ribosomal subunit protein uL22 (129 aa).

This sequence belongs to the universal ribosomal protein uL22 family. Part of the 50S ribosomal subunit.

Functionally, this protein binds specifically to 23S rRNA; its binding is stimulated by other ribosomal proteins, e.g. L4, L17, and L20. It is important during the early stages of 50S assembly. It makes multiple contacts with different domains of the 23S rRNA in the assembled 50S subunit and ribosome. In terms of biological role, the globular domain of the protein is located near the polypeptide exit tunnel on the outside of the subunit, while an extended beta-hairpin is found that lines the wall of the exit tunnel in the center of the 70S ribosome. The protein is Large ribosomal subunit protein uL22 of Agrobacterium fabrum (strain C58 / ATCC 33970) (Agrobacterium tumefaciens (strain C58)).